A 154-amino-acid polypeptide reads, in one-letter code: SsrA-binding protein (154 aa).

A disordered region spans residues K134 to R154.

It belongs to the SmpB family.

It is found in the cytoplasm. Functionally, required for rescue of stalled ribosomes mediated by trans-translation. Binds to transfer-messenger RNA (tmRNA), required for stable association of tmRNA with ribosomes. tmRNA and SmpB together mimic tRNA shape, replacing the anticodon stem-loop with SmpB. tmRNA is encoded by the ssrA gene; the 2 termini fold to resemble tRNA(Ala) and it encodes a 'tag peptide', a short internal open reading frame. During trans-translation Ala-aminoacylated tmRNA acts like a tRNA, entering the A-site of stalled ribosomes, displacing the stalled mRNA. The ribosome then switches to translate the ORF on the tmRNA; the nascent peptide is terminated with the 'tag peptide' encoded by the tmRNA and targeted for degradation. The ribosome is freed to recommence translation, which seems to be the essential function of trans-translation. In Synechococcus sp. (strain JA-2-3B'a(2-13)) (Cyanobacteria bacterium Yellowstone B-Prime), this protein is SsrA-binding protein.